The chain runs to 661 residues: Chermesin D/asnovolin J monooxidase nvfH (661 aa).

Asn12 carries an N-linked (GlcNAc...) asparagine glycan. Residues 89-111 traverse the membrane as a helical segment; sequence VLIIGAGYGGLLFAVRIIQTGAF. Residues 128–131, 140–141, and Tyr146 each bind FAD; these read TWYW and DV. 138–140 serves as a coordination point for NADP(+); the sequence is MCD. Residues 286–292 and 309–310 each bind NADP(+); these read TGATAIQ and RT. N-linked (GlcNAc...) asparagine glycosylation is found at Asn382 and Asn538.

It belongs to the FAD-binding monooxygenase family. The cofactor is FAD.

It is found in the membrane. It carries out the reaction chermesin D + AH2 + O2 = asnovolin I + A + H2O. It catalyses the reaction asnovolin J + AH2 + O2 = asnovolin A + A + H2O. Its pathway is secondary metabolite biosynthesis; terpenoid biosynthesis. Chermesin D/asnovolin J monooxidase; part of the gene cluster that mediates the biosynthesis of novofumigatonin, a heavily oxygenated meroterpenoid containing a unique orthoester moiety. The first step of the pathway is the synthesis of 3,5-dimethylorsellinic acid (DMOA) by the polyketide synthase nvfA via condensation of one acetyl-CoA starter unit with 3 malonyl-CoA units and 2 methylations. DMOA is then converted to farnesyl-DMOA by the farnesyltransferase nvfB. Epoxydation by FAD-dependent monooxygenase nvfK, followed by a protonation-initiated cyclization catalyzed by the terpene cyclase nvfL leads to the production of asnavolin H. The short chain dehydrogenase nvfC then as a 3-OH dehydrogenase of asnovolin H to yield chemesin D. There are two branches to synthesize asnovolin A from chemesin D. In one branch, chemesin D undergoes Baeyer-Villiger oxidation by nvfH, methylation by nvfJ, and enoyl reduction by the nvfM D enoylreductase that reduces the double bond between C-5'and C-6', to form respectively asnovolin I, asnovolin K, and asnovolin A. In the other branch, the methylation precedes the Baeyer-Villiger oxidation and the enoyl reduction to yield asnovolin A via the asnovolin J intermediate. Asnovolin A is further converted to fumigatonoid A by the Fe(II)/2-oxoglutarate-dependent dioxygenase nvfI that catalyzes an endoperoxidation reaction. The alpha/beta hydrolase nvfD then acts as an epimerase that converts fumigatonoid A to its C-5' epimer, which then undergoes spontaneous or nvfD-catalyzed lactonization. The following step utilizes the ketoreductase nvfG to produce fumigatonoid B. The dioxygenase nvfE further converts fumigatonoid B into fumigatonoid C. Finally the Fe(II)/2-oxoglutarate-dependent dioxygenase nvfF catalyzes two rounds of oxidation to transform fumigatonoid C into the end product, novofumigatonin A. The chain is Chermesin D/asnovolin J monooxidase nvfH from Aspergillus novofumigatus (strain IBT 16806).